We begin with the raw amino-acid sequence, 368 residues long: Isopentenyl-diphosphate delta-isomerase (368 aa).

Residue 7–8 coordinates substrate; the sequence is RK. FMN-binding positions include Thr-65, 66–68, Ser-96, and Asn-125; that span reads GMT. Substrate is bound at residue 96 to 98; the sequence is SQR. A substrate-binding site is contributed by Gln-160. Glu-161 is a binding site for Mg(2+). Residues Lys-193, Ser-218, Thr-223, 275–277, and 296–297 each bind FMN; these read GIR and AL.

Belongs to the IPP isomerase type 2 family. Homooctamer. Dimer of tetramers. Requires FMN as cofactor. It depends on NADPH as a cofactor. Mg(2+) is required as a cofactor.

It is found in the cytoplasm. It catalyses the reaction isopentenyl diphosphate = dimethylallyl diphosphate. Its function is as follows. Involved in the biosynthesis of isoprenoids. Catalyzes the 1,3-allylic rearrangement of the homoallylic substrate isopentenyl (IPP) to its allylic isomer, dimethylallyl diphosphate (DMAPP). The sequence is that of Isopentenyl-diphosphate delta-isomerase from Saccharolobus shibatae (strain ATCC 51178 / DSM 5389 / JCM 8931 / NBRC 15437 / B12) (Sulfolobus shibatae).